Reading from the N-terminus, the 91-residue chain is Movement protein TGBp3 (91 aa).

Residues 1–23 (MLGTRNIPTTSGLPLPPPSSSLS) lie on the Lumenal side of the membrane. The chain crosses the membrane as a helical span at residues 24–46 (AYIFPTILAIIFAVFALVAIHIT). Topologically, residues 47–91 (TPEPFCTIHIDGASITITNCPDPAAILNKVAIGPWRGLSYHNNLK) are cytoplasmic.

The protein belongs to the Tymovirales TGBp3 protein family.

The protein localises to the host endoplasmic reticulum membrane. Its function is as follows. Plays a role in viral cell-to-cell propagation, by facilitating genome transport to neighboring plant cells through plasmosdesmata. May induce the formation of granular vesicles derived from the Endoplasmic reticulum, which align on actin filaments. The protein is Movement protein TGBp3 of Cymbidium mosaic virus (strain Singapore).